We begin with the raw amino-acid sequence, 592 residues long: Solute carrier family 13 member 2 (592 aa).

A run of 4 helical transmembrane segments spans residues 13–33 (SYLI…LVPS), 53–73 (ALPL…MGIV), 86–106 (SNLL…WNLH), and 114–134 (LLIV…VTAF). The segment covering 165–177 (SSNVEEGSNNPTF) has biased composition (polar residues). The disordered stretch occupies residues 165 to 185 (SSNVEEGSNNPTFELQEPSPQ). The next 8 helical transmembrane spans lie at 221–241 (MSLC…TGTA), 274–294 (MVIL…GFNF), 324–344 (PMTF…LLWF), 371–391 (GTVA…FPGL), 450–470 (PLQS…VATF), 482–502 (IFLP…LYVM), 511–531 (LAFM…FGDL), and 545–565 (IIGV…LFSL).

The protein belongs to the SLC13A/DASS transporter (TC 2.A.47) family. NADC subfamily. Expressed in kidney and intestine. In kidney expressed in the proximal tubule (at protein level).

It is found in the apical cell membrane. It carries out the reaction succinate(out) + 3 Na(+)(out) = succinate(in) + 3 Na(+)(in). It catalyses the reaction fumarate(out) + 3 Na(+)(out) = fumarate(in) + 3 Na(+)(in). The catalysed reaction is 2-oxoglutarate(out) + 3 Na(+)(out) = 2-oxoglutarate(in) + 3 Na(+)(in). Its activity is regulated as follows. Li(+) decreases succinate transport in the presence of Na(+), by competing at one of the three cation binding sites. In terms of biological role, low-affinity sodium-dicarboxylate cotransporter, that mediates the entry of citric acid cycle intermediates, such as succinate, citrate, fumarate and alpha-ketoglutarate (2-oxoglutarate) into the small intestine and renal proximal tubule. Transports the dicarboxylate into the cell with a probable stoichiometry of 3 Na(+) for 1 divalent dicarboxylate, rendering the process electrogenic. Citrate is transported in protonated form as a divalent anion, rather than the trivalent form which is normally found in blood. Has a critical role in renal dicarboxylate transport. In Homo sapiens (Human), this protein is Solute carrier family 13 member 2 (SLC13A2).